The chain runs to 845 residues: Proto-oncogene vav (845 aa).

One can recognise a Calponin-homology (CH) domain in the interval 1-119 (MELWRQCTHW…YTLSALSWTP (119 aa)). In terms of domain architecture, DH spans 194 to 373 (KRCCCLREIQ…RDLAQCVNEV (180 aa)). In terms of domain architecture, PH spans 402-504 (RPKIDGELKI…WMEQFEMAIS (103 aa)). The Phorbol-ester/DAG-type zinc-finger motif lies at 515–564 (GHDFQMFSFEETTSCKACQMLLRGTFYQGYRCHRCRASAHKECLGRVPPC). An SH3 1 domain is found at 592–660 (LGLPKMEVFQ…PCNRVKPYVH (69 aa)). In terms of domain architecture, SH2 spans 671 to 765 (WYAGPMERAG…SLDTTLQFPF (95 aa)). The SH3 2 domain maps to 782–842 (KYFGTAKARY…PANYVEEDYS (61 aa)). A phosphotyrosine mark is found at Y826 and Y844.

Interacts with SHB. Interacts with SH2B2, GRB2, GRB3, DOCK2, SLA, TEC and ZNF655/VIK. Interacts with SIAH2; without leading to its degradation. Associates with BLNK, PLCG1, GRB2 and NCK1 in a B-cell antigen receptor-dependent fashion. Interacts with CBLB; which inhibits tyrosine phosphorylation and down-regulates activity. May interact with CCPG1. Interacts with CLNK. Interacts with THEMIS2. Interacts with NEK3 and this interaction is prolactin-dependent. Interacts with ITK. Interacts with PTK2B/PYK2. Interacts with HCK. Interacts with PTK2B/PYK2. Interacts (via SH2 domain) with SYK. Interacts with ANKRD54. Interacts with CD6. Interacts with isoform 2 of CRACR2A. Interacts with LCP2; this interaction plays a role in TCR-mediated cytokine production. Post-translationally, phosphorylated on tyrosine residues by HCK in response to IFNG and bacterial lipopolysaccharide (LPS). Phosphorylated by FYN. As to expression, widely expressed in hematopoietic cells but not in other cell types.

In terms of biological role, couples tyrosine kinase signals with the activation of the Rho/Rac GTPases, thus leading to cell differentiation and/or proliferation. The chain is Proto-oncogene vav (VAV1) from Homo sapiens (Human).